The chain runs to 447 residues: C4-dicarboxylate transport protein (447 aa).

The next 8 membrane-spanning stretches (helical) occupy residues 22-42 (FQVIVAIVLGAILGHYEPLVG), 52-72 (FINLVKMIIAPVIFLTIVTGI), 90-110 (AYFLFFSTLALIVGMIVAHVV), 159-179 (GNILQVLFIAVLFGIALASVG), 199-219 (LVHILMKAAPIGAFGAIAFTI), 232-252 (WLVGSFYLTAFLFVAVILGVV), 325-347 (LFIAQATNTELTLGHQIALLLVA), and 366-386 (AATLAVVPEVPVAGMALILGV).

This sequence belongs to the dicarboxylate/amino acid:cation symporter (DAACS) (TC 2.A.23) family.

It localises to the cell inner membrane. Its function is as follows. Responsible for the transport of dicarboxylates such as succinate, fumarate, and malate from the periplasm across the membrane. In Stenotrophomonas maltophilia (strain R551-3), this protein is C4-dicarboxylate transport protein.